The following is a 363-amino-acid chain: S-adenosylmethionine decarboxylase proenzyme (363 aa).

Catalysis depends on residues Glu-9 and Glu-12. The Schiff-base intermediate with substrate; via pyruvic acid role is filled by Ser-69. The residue at position 69 (Ser-69) is a Pyruvic acid (Ser); by autocatalysis. Cys-83 functions as the Proton donor; for catalytic activity in the catalytic mechanism. Catalysis depends on proton acceptor; for processing activity residues Ser-232 and His-245.

It belongs to the eukaryotic AdoMetDC family. Requires pyruvate as cofactor. In terms of processing, is synthesized initially as an inactive proenzyme. Formation of the active enzyme involves a self-maturation process in which the active site pyruvoyl group is generated from an internal serine residue via an autocatalytic post-translational modification. Two non-identical subunits are generated from the proenzyme in this reaction, and the pyruvate is formed at the N-terminus of the alpha chain, which is derived from the carboxyl end of the proenzyme. The post-translation cleavage follows an unusual pathway, termed non-hydrolytic serinolysis, in which the side chain hydroxyl group of the serine supplies its oxygen atom to form the C-terminus of the beta chain, while the remainder of the serine residue undergoes an oxidative deamination to produce ammonia and the pyruvoyl group blocking the N-terminus of the alpha chain.

It catalyses the reaction S-adenosyl-L-methionine + H(+) = S-adenosyl 3-(methylsulfanyl)propylamine + CO2. It functions in the pathway amine and polyamine biosynthesis; S-adenosylmethioninamine biosynthesis; S-adenosylmethioninamine from S-adenosyl-L-methionine: step 1/1. In Spinacia oleracea (Spinach), this protein is S-adenosylmethionine decarboxylase proenzyme (SAMDC).